The following is a 156-amino-acid chain: ATP synthase subunit b (156 aa).

A helical membrane pass occupies residues 3 to 23 (ITLTIFAQALAFAGLIWIVAT).

The protein belongs to the ATPase B chain family. F-type ATPases have 2 components, F(1) - the catalytic core - and F(0) - the membrane proton channel. F(1) has five subunits: alpha(3), beta(3), gamma(1), delta(1), epsilon(1). F(0) has three main subunits: a(1), b(2) and c(10-14). The alpha and beta chains form an alternating ring which encloses part of the gamma chain. F(1) is attached to F(0) by a central stalk formed by the gamma and epsilon chains, while a peripheral stalk is formed by the delta and b chains.

The protein localises to the cell inner membrane. Functionally, f(1)F(0) ATP synthase produces ATP from ADP in the presence of a proton or sodium gradient. F-type ATPases consist of two structural domains, F(1) containing the extramembraneous catalytic core and F(0) containing the membrane proton channel, linked together by a central stalk and a peripheral stalk. During catalysis, ATP synthesis in the catalytic domain of F(1) is coupled via a rotary mechanism of the central stalk subunits to proton translocation. Its function is as follows. Component of the F(0) channel, it forms part of the peripheral stalk, linking F(1) to F(0). This is ATP synthase subunit b from Xanthomonas oryzae pv. oryzae (strain MAFF 311018).